The following is a 263-amino-acid chain: Proteasome subunit alpha type-1 (263 aa).

Met1 is subject to N-acetylmethionine. At Ser110 the chain carries Phosphoserine; alternate. O-linked (GlcNAc) serine; alternate glycosylation is present at Ser110. Lys115 is covalently cross-linked (Glycyl lysine isopeptide (Lys-Gly) (interchain with G-Cter in ubiquitin)). Ser177 is modified (phosphoserine). Residue Lys208 forms a Glycyl lysine isopeptide (Lys-Gly) (interchain with G-Cter in ubiquitin) linkage. Positions 232–263 (FLDGLEERPQRKAQPSQAADEPAEKADEPMEH) are disordered. Basic and acidic residues predominate over residues 253 to 263 (PAEKADEPMEH).

It belongs to the peptidase T1A family. In terms of assembly, the 26S proteasome consists of a 20S proteasome core and two 19S regulatory subunits. The 20S proteasome core is a barrel-shaped complex made of 28 subunits that are arranged in four stacked rings. The two outer rings are each formed by seven alpha subunits, and the two inner rings are formed by seven beta subunits. The proteolytic activity is exerted by three beta-subunits PSMB5, PSMB6 and PSMB7. Interacts with NOTCH3. Interacts with ZFAND1. In terms of processing, proteolytically cleaved from a C-terminal extension in the course of the conversion of the proteasome from its latent form into its active form. Ubiquitous.

It localises to the cytoplasm. The protein localises to the nucleus. Its function is as follows. Component of the 20S core proteasome complex involved in the proteolytic degradation of most intracellular proteins. This complex plays numerous essential roles within the cell by associating with different regulatory particles. Associated with two 19S regulatory particles, forms the 26S proteasome and thus participates in the ATP-dependent degradation of ubiquitinated proteins. The 26S proteasome plays a key role in the maintenance of protein homeostasis by removing misfolded or damaged proteins that could impair cellular functions, and by removing proteins whose functions are no longer required. Associated with the PA200 or PA28, the 20S proteasome mediates ubiquitin-independent protein degradation. This type of proteolysis is required in several pathways including spermatogenesis (20S-PA200 complex) or generation of a subset of MHC class I-presented antigenic peptides (20S-PA28 complex). This Rattus norvegicus (Rat) protein is Proteasome subunit alpha type-1 (Psma1).